Here is an 804-residue protein sequence, read N- to C-terminus: Phenylalanine--tRNA ligase beta subunit (804 aa).

A tRNA-binding domain is found at 39-155; it reads EEGLKKLVVG…ADVKPGQDVY (117 aa). In terms of domain architecture, B5 spans 408 to 483; that stretch reads REPVVVKTTV…RIYGYDNLKS (76 aa). Residues Asp461, Asp467, Glu470, and Glu471 each contribute to the Mg(2+) site. Positions 711 to 804 constitute an FDX-ACB domain; that stretch reads PKFPAIERDL…LENDLDIKVR (94 aa).

The protein belongs to the phenylalanyl-tRNA synthetase beta subunit family. Type 1 subfamily. Tetramer of two alpha and two beta subunits. The cofactor is Mg(2+).

Its subcellular location is the cytoplasm. It catalyses the reaction tRNA(Phe) + L-phenylalanine + ATP = L-phenylalanyl-tRNA(Phe) + AMP + diphosphate + H(+). The protein is Phenylalanine--tRNA ligase beta subunit of Lactobacillus acidophilus (strain ATCC 700396 / NCK56 / N2 / NCFM).